Reading from the N-terminus, the 658-residue chain is MVPRLLLRAWPRGPAVGPGAPSRPLSAGSGPGQYLQRSIVPTMHYQDSLPRLPIPKLEDTIRRYLSAQKPLLDDGQFRKTEQFCKNFENGIGKELHEQLVAQDKQNKHTSYISGPWFDMYLSARDSVVLNFNPFMAFNPDPKSEYNDQLTRATNMTVSAIRFLKTLRDGLLEPEVFHLNPAKSDTDTFKRLIRFVPSSLSWYGAYLVNAYPLDMSQYFRLFNSTRLPKPSRDELFTDDKARHLLVLRKGNFYIFDVLDQDGNIVSPSEIQAHLKYILSDSSPAPEFPLAYLTSENRDIWAELRQKLMSSGNEESLRKVDSAVFCLCLDDFPIKDLVHLSHNMLHGDGTNRWFDKSFNLIIAKDGSAAVHFEHSWGDGVAVLRFFNEVFKDSTQIPAITPQSQPATADSTVTVQKLNFKLTDALKTGITAAKEKFDATMKTLTIDCLQFQRGGKEFLKKQKLSPDAVAQLAFQMAFLRQYGQTVATYESCSTAAFKHGRTETIRPASIYTKRCSEAFVREPSRHSAGELQQMMAECSKYHGQLTKEAAMGQGFDRHLFALRHLAAAKGIILPELYLDPAYGQINHNVLSTSTLSSPAVNLGGFAPVVSDGFGVGYAVHGNWIGCNVSSYPGRNAREFLQCVEKALEDMFDALEGKSIKS.

Residues 1–25 (MVPRLLLRAWPRGPAVGPGAPSRPL) constitute a mitochondrion transit peptide. Topologically, residues 26–178 (SAGSGPGQYL…GLLEPEVFHL (153 aa)) are mitochondrial matrix. Residue lysine 69 is modified to N6-succinyllysine. Position 79 is an N6-acetyllysine (lysine 79). At lysine 85 the chain carries N6-succinyllysine. Residues 179–208 (NPAKSDTDTFKRLIRFVPSSLSWYGAYLVN) constitute an intramembrane region (note=Mitochondrial inner membrane). At 209–658 (AYPLDMSQYF…DALEGKSIKS (450 aa)) the chain is on the mitochondrial matrix side. Lysine 239 is modified (N6-acetyllysine; alternate). Residue lysine 239 is modified to N6-succinyllysine; alternate. Lysine 305 carries the post-translational modification N6-acetyllysine. Histidine 372 serves as the catalytic Proton acceptor. Lysine 418 carries the post-translational modification N6-acetyllysine; alternate. Lysine 418 carries the post-translational modification N6-succinyllysine; alternate. An N6-succinyllysine mark is found at lysine 424 and lysine 439. A CoA-binding site is contributed by 452 to 464 (GKEFLKKQKLSPD). 3 residues coordinate (R)-carnitine: tyrosine 486, serine 488, and threonine 499. N6-acetyllysine; alternate occurs at positions 510 and 544. Residues lysine 510 and lysine 544 each carry the N6-succinyllysine; alternate modification.

Belongs to the carnitine/choline acetyltransferase family.

Its subcellular location is the mitochondrion inner membrane. The enzyme catalyses (R)-carnitine + hexadecanoyl-CoA = O-hexadecanoyl-(R)-carnitine + CoA. It carries out the reaction octanoyl-CoA + (R)-carnitine = O-octanoyl-(R)-carnitine + CoA. The catalysed reaction is decanoyl-CoA + (R)-carnitine = O-decanoyl-(R)-carnitine + CoA. It catalyses the reaction dodecanoyl-CoA + (R)-carnitine = O-dodecanoyl-R-carnitine + CoA. The enzyme catalyses tetradecanoyl-CoA + (R)-carnitine = O-tetradecanoyl-(R)-carnitine + CoA. It carries out the reaction (R)-carnitine + octadecanoyl-CoA = O-octadecanoyl-(R)-carnitine + CoA. The catalysed reaction is eicosanoyl-CoA + (R)-carnitine = O-eicosanoyl-(R)-carnitine + CoA. It catalyses the reaction (9Z)-tetradecenoyl-CoA + (R)-carnitine = O-(9Z)-tetradecenoyl-(R)-carnitine + CoA. The enzyme catalyses (5Z)-tetradecenoyl-CoA + (R)-carnitine = O-(5Z)-tetradecenoyl-(R)-carnitine + CoA. It carries out the reaction (R)-carnitine + (9Z)-octadecenoyl-CoA = O-(9Z)-octadecenoyl-(R)-carnitine + CoA. The catalysed reaction is 4,8-dimethylnonanoyl-CoA + (R)-carnitine = O-4,8-dimethylnonanoyl-(R)-carnitine + CoA. It participates in lipid metabolism; fatty acid beta-oxidation. Its function is as follows. Involved in the intramitochondrial synthesis of acylcarnitines from accumulated acyl-CoA metabolites. Reconverts acylcarnitines back into the respective acyl-CoA esters that can then undergo beta-oxidation, an essential step for the mitochondrial uptake of long-chain fatty acids and their subsequent beta-oxidation in the mitochondrion. Active with medium (C8-C12) and long-chain (C14-C18) acyl-CoA esters. The sequence is that of Carnitine O-palmitoyltransferase 2, mitochondrial (CPT2) from Macaca fascicularis (Crab-eating macaque).